The chain runs to 215 residues: T-complex protein 10A homolog 1 (215 aa).

Residues 1–25 are disordered; that stretch reads MLAGQLEARDPKEGTHPEDPCPGAG. A compositionally biased stretch (basic and acidic residues) spans 7–19; the sequence is EARDPKEGTHPED. A coiled-coil region spans residues 69-110; the sequence is ADVHGKLRSHIDALREQNMELREKLRALQLQRWKARKKSAAS. Positions 75 to 96 are leucine-zipper; that stretch reads LRSHIDALREQNMELREKLRAL. Residues 150-163 are compositionally biased toward polar residues; the sequence is ATLLGQRSSSNNSA. Residues 150 to 215 are disordered; it reads ATLLGQRSSS…TPCAERRGGV (66 aa).

The protein belongs to the TCP10 family. As to quaternary structure, self-associates (via leucine zipper). Interacts (via leucine zipper) with ZIPK/DAPK3 (via leucine zipper). Interacts with MAD4. In terms of tissue distribution, expressed in liver and testis. Expressed in the seminiferous tubules (at protein level).

The protein localises to the nucleus. In terms of biological role, may be involved in transcriptional regulation. Has in vitro transcription inhibition activity. Acts as a tumor suppressor in hepatocellular carcinoma (HCC) cells. This is T-complex protein 10A homolog 1 (TCP10L) from Homo sapiens (Human).